The chain runs to 97 residues: Zinc metalloproteinase-disintegrin-like bothrojarin-4 (97 aa).

In terms of domain architecture, Disintegrin spans 4–90 (PPVCGNYFVE…DCPTDRFRRN (87 aa)). Ca(2+) is bound by residues valine 6, asparagine 9, phenylalanine 11, glutamate 13, glutamate 16, and aspartate 19. 7 disulfide bridges follow: cysteine 7/cysteine 36, cysteine 18/cysteine 31, cysteine 20/cysteine 26, cysteine 30/cysteine 53, cysteine 44/cysteine 50, cysteine 49/cysteine 75, and cysteine 62/cysteine 82. Residue asparagine 32 is glycosylated (N-linked (GlcNAc...) asparagine). The D/ECD-tripeptide; atypical (KCD) signature appears at 68–70 (KCD).

It belongs to the venom metalloproteinase (M12B) family. P-III subfamily. P-IIIa sub-subfamily. In terms of assembly, monomer. Zn(2+) serves as cofactor. As to expression, expressed by the venom gland.

It is found in the secreted. Its function is as follows. The hemorrhagic metalloproteinase-disintegrin-like bothrojarin-1 is a potent inhibitor of collagen-induced platelet aggregation by blockage of alpha-2/beta-1 (ITGA2/ITGB1) integrin. It does not present any fibrinogen-clotting activity. This chain is Zinc metalloproteinase-disintegrin-like bothrojarin-4, found in Bothrops jararaca (Jararaca).